We begin with the raw amino-acid sequence, 102 residues long: DNA/RNA-binding protein Alba 2 (102 aa).

DNA is bound by residues Arg-10, Arg-13, Arg-40, Arg-42, Asn-43, Arg-46, and Arg-86.

It belongs to the histone-like Alba family. As to quaternary structure, forms homodimers and homotetramers; oligomerization is enhanced and stabilized by DNA. Interacts with Alba 1.

It is found in the cytoplasm. It localises to the chromosome. Its function is as follows. Binds double-stranded DNA tightly but without sequence specificity. Involved in DNA compaction. This chain is DNA/RNA-binding protein Alba 2, found in Aeropyrum pernix (strain ATCC 700893 / DSM 11879 / JCM 9820 / NBRC 100138 / K1).